Consider the following 85-residue polypeptide: N.vectensis toxin 1 5 (85 aa).

Residues 1–20 form the signal peptide; that stretch reads MASFKIVIVCLALLVAVACA. Residues 21-36 constitute a propeptide that is removed on maturation; the sequence is RRRDMMSDDELDFHLS. 3 cysteine pairs are disulfide-bonded: C42–C82, C44–C72, and C65–C83.

It belongs to the sea anemone sodium channel inhibitory toxin family. Type II subfamily. As to expression, expressed in ectodermal glands and in clumps outside of the extodermal layer. Is not expressed in nematocytes. In adult female tissues, shows similar expression levels in mesenteries (gametes-producing tissue), tentacles, pharynx and physa.

It localises to the secreted. Its function is as follows. Binds to site 3 of voltage-gated sodium channels and inhibits the inactivation process. Is highly active on DmNav1/TipE (drosophila) and is only extremely weakly active on rat Nav1.4-beta-1/SCN4A-SCN1B, and on human Nav1.5-beta-1/SCN5A-beta-1. This reveals high specificity for arthropod over mammalian channels. In vivo, when released into the medium, this recombinant toxin induces impaired swimming, paralysis and death of the crustacean A.nauplii within several hours. Also causes paralysis of cherry shrimps immediately after injection at very low doses. Its effect on zebrafish (D.rerio) larvae is also rapid, since it induces tail twitching accompanied by impaired swimming after 20 minutes and complete paralysis within 45 minutes. It has also been observed to cause death of zebrafish larvae within 1 hour. The polypeptide is N.vectensis toxin 1 5 (Nematostella vectensis (Starlet sea anemone)).